The following is a 176-amino-acid chain: Pectinesterase inhibitor 1 (176 aa).

A signal peptide spans 1–25; that stretch reads MAANLRNNAFLSSLMFLLLIGSSYA. Cystine bridges form between Cys-35/Cys-44 and Cys-98/Cys-138. Residue Asn-154 is glycosylated (N-linked (GlcNAc...) asparagine).

Belongs to the PMEI family. As to quaternary structure, monomer and homodimer. Interacts in vitro with PPME1. Highest expression in flowers. Expressed exclusively at the pollen tube tip.

It localises to the secreted. The protein localises to the extracellular space. It is found in the apoplast. In terms of biological role, inhibits pectin methylesterase (PME) from flowers and siliques. Inhibits PME from leaves. This is Pectinesterase inhibitor 1 from Arabidopsis thaliana (Mouse-ear cress).